Consider the following 319-residue polypeptide: tRNA uridine(34) hydroxylase (319 aa).

Positions 133 to 231 constitute a Rhodanese domain; sequence EDPNSVVIDT…YLEDVSSENS (99 aa). The active-site Cysteine persulfide intermediate is the C191.

It belongs to the TrhO family.

The catalysed reaction is uridine(34) in tRNA + AH2 + O2 = 5-hydroxyuridine(34) in tRNA + A + H2O. Catalyzes oxygen-dependent 5-hydroxyuridine (ho5U) modification at position 34 in tRNAs. In Prochlorococcus marinus (strain NATL2A), this protein is tRNA uridine(34) hydroxylase.